Here is a 322-residue protein sequence, read N- to C-terminus: Gas vesicle protein L (322 aa).

The segment at methionine 1–threonine 85 is disordered. Basic and acidic residues predominate over residues glutamate 17 to threonine 36. A compositionally biased stretch (polar residues) spans isoleucine 45 to glutamate 57. The span at glutamine 58–serine 72 shows a compositional bias: basic and acidic residues. Positions glutamate 73 to threonine 85 are enriched in polar residues.

It belongs to the gas vesicle GvpF/GvpL family. GvpF to GvpM interact with each other in vitro, and may form multi-subunit complex(es). Interacts with GvpC, GvpN and GvpO.

The protein localises to the gas vesicle. Its function is as follows. Proteins GvpF to GvpM might be involved in nucleating gas vesicle formation. A minor component of the gas vesicle. Gas vesicles are small, hollow, gas filled protein structures that are found in several microbial planktonic microorganisms. They allow positioning of halobacteria at the optimal depth for growth in the poorly aerated, shallow brine pools of their habitat. Expression of a 9.5 kb mc-vac DNA fragment containing 2 divergently transcribed regions (gvpD-gvpE-gvpF-gvpG-gvpH-gvpI-gvpJ-gvpK-gvpL-gvpM and gvpA-gvpC-gvpN-gvpO) allows H.volcanii to produce gas vesicles. The sequence is that of Gas vesicle protein L from Haloferax mediterranei (strain ATCC 33500 / DSM 1411 / JCM 8866 / NBRC 14739 / NCIMB 2177 / R-4) (Halobacterium mediterranei).